A 326-amino-acid polypeptide reads, in one-letter code: Putative GTPase CC_2483 (326 aa).

GTP contacts are provided by residues 61–69, aspartate 203, and 238–240; these read GVPGAGKST and SGL.

Belongs to the SIMIBI class G3E GTPase family. ArgK/MeaB subfamily.

May have GTPase activity. May also bind and hydrolyze ATP. May function as chaperone. The polypeptide is Putative GTPase CC_2483 (Caulobacter vibrioides (strain ATCC 19089 / CIP 103742 / CB 15) (Caulobacter crescentus)).